We begin with the raw amino-acid sequence, 145 residues long: D-aminoacyl-tRNA deacylase (145 aa).

Positions 137 to 138 match the Gly-cisPro motif, important for rejection of L-amino acids motif; sequence GP.

The protein belongs to the DTD family. In terms of assembly, homodimer.

It localises to the cytoplasm. It carries out the reaction glycyl-tRNA(Ala) + H2O = tRNA(Ala) + glycine + H(+). It catalyses the reaction a D-aminoacyl-tRNA + H2O = a tRNA + a D-alpha-amino acid + H(+). Its function is as follows. An aminoacyl-tRNA editing enzyme that deacylates mischarged D-aminoacyl-tRNAs. Also deacylates mischarged glycyl-tRNA(Ala), protecting cells against glycine mischarging by AlaRS. Acts via tRNA-based rather than protein-based catalysis; rejects L-amino acids rather than detecting D-amino acids in the active site. By recycling D-aminoacyl-tRNA to D-amino acids and free tRNA molecules, this enzyme counteracts the toxicity associated with the formation of D-aminoacyl-tRNA entities in vivo and helps enforce protein L-homochirality. The sequence is that of D-aminoacyl-tRNA deacylase from Lactobacillus delbrueckii subsp. bulgaricus (strain ATCC 11842 / DSM 20081 / BCRC 10696 / JCM 1002 / NBRC 13953 / NCIMB 11778 / NCTC 12712 / WDCM 00102 / Lb 14).